Here is a 2628-residue protein sequence, read N- to C-terminus: Hemagglutinin A (2628 aa).

An N-terminal signal peptide occupies residues 1–24 (MRKLNSLFSLAVLLSLLCWGQTAA). Peptidase C25-like regions lie at residues 25 to 539 (AQGG…TPPP), 540 to 995 (GGTS…TPPP), 996 to 1451 (GGTS…TPPP), 1452 to 1907 (GGTS…TPPP), and 2074 to 2628 (IDAD…LAVK). Disordered stretches follow at residues 493 to 512 (WDAPNGTPNPNPGTTTLSES), 520 to 546 (SWKTIDADGDGNNWTTTPPPGGTSFAG), 944 to 1002 (KWDA…SFAG), 1400 to 1458 (KWDA…SFAG), 1856 to 1881 (KWDAPNGTPNPNPNPNPGTTTLSESF), 1890 to 1909 (KTIDADGDGNNWTTTPPPGG), and 2336 to 2358 (SSWKTIDADGDGNNWTTTPPPGG). A compositionally biased stretch (low complexity) spans 496-508 (PNGTPNPNPGTTT).

The protein belongs to the peptidase C25 family.

In terms of biological role, agglutinates erythrocytes. The protein is Hemagglutinin A (hagA) of Porphyromonas gingivalis (Bacteroides gingivalis).